The chain runs to 122 residues: Aspartate 1-decarboxylase (122 aa).

The active-site Schiff-base intermediate with substrate; via pyruvic acid is S25. S25 is subject to Pyruvic acid (Ser). Substrate is bound at residue T57. The Proton donor role is filled by Y58. 73 to 75 (GAA) is a binding site for substrate.

This sequence belongs to the PanD family. As to quaternary structure, heterooctamer of four alpha and four beta subunits. Pyruvate is required as a cofactor. In terms of processing, is synthesized initially as an inactive proenzyme, which is activated by self-cleavage at a specific serine bond to produce a beta-subunit with a hydroxyl group at its C-terminus and an alpha-subunit with a pyruvoyl group at its N-terminus.

It localises to the cytoplasm. It catalyses the reaction L-aspartate + H(+) = beta-alanine + CO2. It participates in cofactor biosynthesis; (R)-pantothenate biosynthesis; beta-alanine from L-aspartate: step 1/1. Functionally, catalyzes the pyruvoyl-dependent decarboxylation of aspartate to produce beta-alanine. This is Aspartate 1-decarboxylase from Bordetella avium (strain 197N).